The following is a 475-amino-acid chain: Transmembrane protein 44 (475 aa).

Residues Met-1–Ser-29 are Extracellular-facing. Residues Phe-30–Leu-50 traverse the membrane as a helical segment. Topologically, residues Arg-51–Ser-61 are cytoplasmic. Residues Ala-62–Ala-82 form a helical membrane-spanning segment. Over Arg-83 to Gln-88 the chain is Extracellular. Residues Val-89–Pro-109 form a helical membrane-spanning segment. Topologically, residues Val-110–Ser-135 are cytoplasmic. Residues Val-136–Pro-156 form a helical membrane-spanning segment. Over Lys-157–Glu-179 the chain is Extracellular. Residues Ile-180 to Pro-200 form a helical membrane-spanning segment. Residues Leu-201 to Ser-259 are Cytoplasmic-facing. The chain crosses the membrane as a helical span at residues Ile-260–Val-280. The Extracellular segment spans residues Ala-281–Pro-294. A helical membrane pass occupies residues Trp-295 to Val-315. At Met-316–Asp-475 the chain is on the cytoplasmic side. A disordered region spans residues Ser-390 to Asp-475. Over residues Ser-424–Ser-436 the composition is skewed to low complexity. The span at Asp-464–Asp-475 shows a compositional bias: basic and acidic residues. Position 465 is a phosphoserine (Ser-465).

It is found in the membrane. The chain is Transmembrane protein 44 (TMEM44) from Homo sapiens (Human).